The sequence spans 79 residues: RNA-binding protein KhpA (79 aa).

The 48-residue stretch at 32 to 79 (TVVIELRVDPAELGKVIGKQGRIARALRTILTAIGRKIGKRVVLEILE) folds into the KH domain.

The protein belongs to the KhpA RNA-binding protein family.

It is found in the cytoplasm. Functionally, a probable RNA-binding protein. This chain is RNA-binding protein KhpA, found in Aquifex aeolicus (strain VF5).